The chain runs to 364 residues: tRNA 2-selenouridine synthase (364 aa).

The Rhodanese domain occupies 14 to 137 (LLADTPLIDV…LRQTAIQATW (124 aa)). The active-site S-selanylcysteine intermediate is the cysteine 97.

Belongs to the SelU family. As to quaternary structure, monomer.

The enzyme catalyses 5-methylaminomethyl-2-thiouridine(34) in tRNA + selenophosphate + (2E)-geranyl diphosphate + H2O + H(+) = 5-methylaminomethyl-2-selenouridine(34) in tRNA + (2E)-thiogeraniol + phosphate + diphosphate. It carries out the reaction 5-methylaminomethyl-2-thiouridine(34) in tRNA + (2E)-geranyl diphosphate = 5-methylaminomethyl-S-(2E)-geranyl-thiouridine(34) in tRNA + diphosphate. It catalyses the reaction 5-methylaminomethyl-S-(2E)-geranyl-thiouridine(34) in tRNA + selenophosphate + H(+) = 5-methylaminomethyl-2-(Se-phospho)selenouridine(34) in tRNA + (2E)-thiogeraniol. The catalysed reaction is 5-methylaminomethyl-2-(Se-phospho)selenouridine(34) in tRNA + H2O = 5-methylaminomethyl-2-selenouridine(34) in tRNA + phosphate. Functionally, involved in the post-transcriptional modification of the uridine at the wobble position (U34) of tRNA(Lys), tRNA(Glu) and tRNA(Gln). Catalyzes the conversion of 2-thiouridine (S2U-RNA) to 2-selenouridine (Se2U-RNA). Acts in a two-step process involving geranylation of 2-thiouridine (S2U) to S-geranyl-2-thiouridine (geS2U) and subsequent selenation of the latter derivative to 2-selenouridine (Se2U) in the tRNA chain. This Salmonella gallinarum (strain 287/91 / NCTC 13346) protein is tRNA 2-selenouridine synthase.